Reading from the N-terminus, the 339-residue chain is Ketol-acid reductoisomerase (NADP(+)) (339 aa).

The KARI N-terminal Rossmann domain maps to 1-182 (MRVYYDRDAD…GGGRSGVIET (182 aa)). Residues 24–27 (YGSQ), R48, S51, T53, and 83–86 (DELQ) each bind NADP(+). Residue H108 is part of the active site. G134 contacts NADP(+). Residues 183–328 (TFKEECETDL…GKLRAMMPWI (146 aa)) form the KARI C-terminal knotted domain. Mg(2+)-binding residues include D191, E195, E227, and E231. S252 is a substrate binding site.

It belongs to the ketol-acid reductoisomerase family. Requires Mg(2+) as cofactor.

The enzyme catalyses (2R)-2,3-dihydroxy-3-methylbutanoate + NADP(+) = (2S)-2-acetolactate + NADPH + H(+). It carries out the reaction (2R,3R)-2,3-dihydroxy-3-methylpentanoate + NADP(+) = (S)-2-ethyl-2-hydroxy-3-oxobutanoate + NADPH + H(+). The protein operates within amino-acid biosynthesis; L-isoleucine biosynthesis; L-isoleucine from 2-oxobutanoate: step 2/4. Its pathway is amino-acid biosynthesis; L-valine biosynthesis; L-valine from pyruvate: step 2/4. Its function is as follows. Involved in the biosynthesis of branched-chain amino acids (BCAA). Catalyzes an alkyl-migration followed by a ketol-acid reduction of (S)-2-acetolactate (S2AL) to yield (R)-2,3-dihydroxy-isovalerate. In the isomerase reaction, S2AL is rearranged via a Mg-dependent methyl migration to produce 3-hydroxy-3-methyl-2-ketobutyrate (HMKB). In the reductase reaction, this 2-ketoacid undergoes a metal-dependent reduction by NADPH to yield (R)-2,3-dihydroxy-isovalerate. This Brucella suis (strain ATCC 23445 / NCTC 10510) protein is Ketol-acid reductoisomerase (NADP(+)).